Reading from the N-terminus, the 588-residue chain is Synaptotagmin-3 (588 aa).

At 1-54 (MSGDYEDDLCRRALILVSDLCARIRDADTNDRCQEFNELRIRGYPRGPDADISV) the chain is on the vesicular side. The tract at residues 10-34 (CRRALILVSDLCARIRDADTNDRCQ) is cysteine motif. The chain crosses the membrane as a helical span at residues 55–75 (SLLSVIVTFCGIVLLGVSLFV). Residues 76-588 (SWKLCWVPWR…KGLSEKENSE (513 aa)) are Cytoplasmic-facing. 3 disordered regions span residues 129 to 161 (GGPH…PEPS), 183 to 222 (PSQT…VTSL), and 238 to 257 (QTLT…ALPL). Positions 183–205 (PSQTSPELPSEGGTGSGLLLLPP) are enriched in low complexity. The segment covering 213–222 (AQSHQQVTSL) has biased composition (polar residues). An Omega-N-methylarginine modification is found at arginine 286. C2 domains follow at residues 297–418 (PCGR…PLWR) and 429–563 (DLGE…EHWH). Ca(2+)-binding residues include aspartate 328, aspartate 334, aspartate 386, phenylalanine 387, aspartate 388, serine 391, aspartate 394, aspartate 460, aspartate 466, aspartate 520, and aspartate 522.

It belongs to the synaptotagmin family. Homodimer; disulfide-linked via the cysteine motif. Can also form heterodimers with SYT6, SYT9 and SYT10. Ca(2+) is required as a cofactor. In terms of tissue distribution, brain, various endocrine tissues and hormone-secreting clonal cells.

Its subcellular location is the cell membrane. The protein localises to the cytoplasmic vesicle. It localises to the secretory vesicle membrane. Ca(2+) sensor involved in Ca(2+)-dependent exocytosis of secretory vesicles through Ca(2+) and phospholipid binding to the C2 domain. Ca(2+) induces binding of the C2-domains to phospholipid membranes and to assembled SNARE-complexes; both actions contribute to triggering exocytosis. Plays a role in dendrite formation by melanocytes. The chain is Synaptotagmin-3 (Syt3) from Rattus norvegicus (Rat).